Reading from the N-terminus, the 448-residue chain is Chromosomal replication initiator protein DnaA (448 aa).

A domain I, interacts with DnaA modulators region spans residues 1–73 (MNTHLTETWE…VNALKLLTSK (73 aa)). A domain II region spans residues 73–109 (KKYNIDFIVTTEEKIEENQKNHNNEKSNIVVNDEMST). Residues 110 to 326 (MLNPKYTFDS…GALIRIVAFS (217 aa)) are domain III, AAA+ region. ATP is bound by residues G154, G156, K157, and T158. A domain IV, binds dsDNA region spans residues 327–448 (SLTNKEISID…KELNKRINQK (122 aa)).

The protein belongs to the DnaA family. In terms of assembly, oligomerizes as a right-handed, spiral filament on DNA at oriC.

It localises to the cytoplasm. Its function is as follows. Plays an essential role in the initiation and regulation of chromosomal replication. ATP-DnaA binds to the origin of replication (oriC) to initiate formation of the DNA replication initiation complex once per cell cycle. Binds the DnaA box (a 9 base pair repeat at the origin) and separates the double-stranded (ds)DNA. Forms a right-handed helical filament on oriC DNA; dsDNA binds to the exterior of the filament while single-stranded (ss)DNA is stabiized in the filament's interior. The ATP-DnaA-oriC complex binds and stabilizes one strand of the AT-rich DNA unwinding element (DUE), permitting loading of DNA polymerase. After initiation quickly degrades to an ADP-DnaA complex that is not apt for DNA replication. Binds acidic phospholipids. This is Chromosomal replication initiator protein DnaA from Clostridium botulinum (strain ATCC 19397 / Type A).